We begin with the raw amino-acid sequence, 83 residues long: MTARRREAAPAKKRRNLLKSLGIERVDYKDTSTLRQFISERGKIRSRSVTGLTVQQQRQVTTAVKTAREMALLPYPGQNPTGR.

This sequence belongs to the bacterial ribosomal protein bS18 family. As to quaternary structure, part of the 30S ribosomal subunit. Forms a tight heterodimer with protein bS6.

In terms of biological role, binds as a heterodimer with protein bS6 to the central domain of the 16S rRNA, where it helps stabilize the platform of the 30S subunit. In Mycolicibacterium vanbaalenii (strain DSM 7251 / JCM 13017 / BCRC 16820 / KCTC 9966 / NRRL B-24157 / PYR-1) (Mycobacterium vanbaalenii), this protein is Small ribosomal subunit protein bS18A.